A 754-amino-acid chain; its full sequence is 5-methyltetrahydropteroyltriglutamate--homocysteine methyltransferase (754 aa).

5-methyltetrahydropteroyltri-L-glutamate-binding positions include 19–22 (RELK) and K121. L-homocysteine contacts are provided by residues 423-425 (IGS) and E476. L-methionine contacts are provided by residues 423–425 (IGS) and E476. Residues 507–508 (RC) and W553 contribute to the 5-methyltetrahydropteroyltri-L-glutamate site. Residue D591 participates in L-homocysteine binding. D591 is a binding site for L-methionine. E597 is a 5-methyltetrahydropteroyltri-L-glutamate binding site. The Zn(2+) site is built by H633, C635, and E657. Catalysis depends on H686, which acts as the Proton donor. Position 718 (C718) interacts with Zn(2+).

The protein belongs to the vitamin-B12 independent methionine synthase family. Zn(2+) serves as cofactor.

It carries out the reaction 5-methyltetrahydropteroyltri-L-glutamate + L-homocysteine = tetrahydropteroyltri-L-glutamate + L-methionine. It participates in amino-acid biosynthesis; L-methionine biosynthesis via de novo pathway; L-methionine from L-homocysteine (MetE route): step 1/1. Functionally, catalyzes the transfer of a methyl group from 5-methyltetrahydrofolate to homocysteine resulting in methionine formation. This is 5-methyltetrahydropteroyltriglutamate--homocysteine methyltransferase from Corynebacterium efficiens (strain DSM 44549 / YS-314 / AJ 12310 / JCM 11189 / NBRC 100395).